A 274-amino-acid chain; its full sequence is Large ribosomal subunit protein uL2cz/uL2cy (274 aa).

Disordered regions lie at residues 1-25 (MAIH…VKSN) and 224-274 (NPVD…RRSK).

The protein belongs to the universal ribosomal protein uL2 family. As to quaternary structure, part of the 50S ribosomal subunit.

It localises to the plastid. The protein resides in the chloroplast. This Cucumis sativus (Cucumber) protein is Large ribosomal subunit protein uL2cz/uL2cy (rpl2-A).